A 334-amino-acid chain; its full sequence is DNA-directed RNA polymerase subunit alpha (334 aa).

The alpha N-terminal domain (alpha-NTD) stretch occupies residues 1–231; that stretch reads MNMIKIEPYI…KQMSIFGVDL (231 aa). Residues 247–334 are alpha C-terminal domain (alpha-CTD); the sequence is ELKTLMIKID…NRKLAKLKSN (88 aa).

This sequence belongs to the RNA polymerase alpha chain family. Homodimer. The RNAP catalytic core consists of 2 alpha, 1 beta/beta' and 1 omega subunit. When a sigma factor is associated with the core the holoenzyme is formed, which can initiate transcription.

The catalysed reaction is RNA(n) + a ribonucleoside 5'-triphosphate = RNA(n+1) + diphosphate. Functionally, DNA-dependent RNA polymerase catalyzes the transcription of DNA into RNA using the four ribonucleoside triphosphates as substrates. The sequence is that of DNA-directed RNA polymerase subunit alpha from Helicobacter hepaticus (strain ATCC 51449 / 3B1).